Here is a 505-residue protein sequence, read N- to C-terminus: Prenylcysteine oxidase 1 (505 aa).

Residues 1-27 (MGRVVAELVSSLLGLWLLLCSCGCPEG) form the signal peptide. Asparagine 196, asparagine 323, and asparagine 353 each carry an N-linked (GlcNAc...) asparagine glycan.

It belongs to the prenylcysteine oxidase family. It depends on FAD as a cofactor. Widely expressed.

It is found in the lysosome. The catalysed reaction is an S-polyprenyl-L-cysteine + O2 + H2O = a polyprenal + L-cysteine + H2O2. It carries out the reaction S-(2E,6E)-farnesyl-L-cysteine + O2 + H2O = (2E,6E)-farnesal + L-cysteine + H2O2. The enzyme catalyses [(2E,6E,10E)-geranylgeranyl]-L-cysteine + O2 + H2O = (2E,6E,10E)-geranylgeranial + L-cysteine + H2O2. In terms of biological role, prenylcysteine oxidase that cleaves the thioether bond of prenyl-L-cysteines, such as farnesylcysteine and geranylgeranylcysteine. Only active against free prenylcysteines and not prenylcysteine residues within prenylated proteins or peptides. Involved in the final step in the degradation of prenylated proteins, by degrading prenylcysteines after the protein has been degraded. The polypeptide is Prenylcysteine oxidase 1 (Homo sapiens (Human)).